We begin with the raw amino-acid sequence, 100 residues long: Small ribosomal subunit protein uS14c (100 aa).

The protein belongs to the universal ribosomal protein uS14 family. As to quaternary structure, part of the 30S ribosomal subunit.

The protein resides in the plastid. In terms of biological role, binds 16S rRNA, required for the assembly of 30S particles. The chain is Small ribosomal subunit protein uS14c from Cuscuta obtusiflora (Peruvian dodder).